The following is a 369-amino-acid chain: Protein V (369 aa).

2 disordered regions span residues 1–23 (MDQD…GGRE) and 54–320 (INTL…GHRR). Composition is skewed to basic and acidic residues over residues 7–20 (ISKE…EASG), 99–110 (AEAHARNVDKQN), 150–168 (GAED…RGED), and 175–193 (EEIR…RADN). Phosphoserine; by host is present on residues serine 249, serine 257, and serine 260. Positions 318, 337, 341, 353, 355, 358, 362, and 365 each coordinate Zn(2+).

The protein belongs to the paramyxoviruses V protein family. Interacts with host IFIH1/MDA5 and DHX58/LGP2. Interacts with host IRF3. Interacts with host RIGI regulatory protein (via CARDs domain) and host TRIM25 (via SPRY domain); these interactions prevent TRIM25-mediated ubiquitination of RIG-I and disrupts downstream RIG-I signaling.

The protein localises to the host cytoplasm. Plays an essential role in the inhibition of host immune response. Prevents the establishment of cellular antiviral state by blocking interferon-alpha/beta (IFN-alpha/beta) production and signaling pathway. Interacts with host IFIH1/MDA5 and DHX58/LGP2 to inhibit the transduction pathway involved in the activation of IFN-beta promoter, thus protecting the virus against cell antiviral state. Also interacts with and inhibits host IRF3. Blocks the type I interferon signaling pathway by disrupting the RIG-I signaling pathway. The protein is Protein V (P/V/C) of Cavia cutleri (Guinea pig).